Here is a 229-residue protein sequence, read N- to C-terminus: uncharacterized protein (229 aa).

Positions 2 to 69 constitute an S4 RNA-binding domain; it reads QRLAKLISNA…KSRLWIYYKP (68 aa). The active-site Nucleophile is Asp102.

The protein belongs to the pseudouridine synthase RsuA family.

It carries out the reaction a uridine in RNA = a pseudouridine in RNA. This is an uncharacterized protein from Rickettsia bellii (strain RML369-C).